Consider the following 274-residue polypeptide: Urease accessory protein UreD (274 aa).

Belongs to the UreD family. UreD, UreF and UreG form a complex that acts as a GTP-hydrolysis-dependent molecular chaperone, activating the urease apoprotein by helping to assemble the nickel containing metallocenter of UreC. The UreE protein probably delivers the nickel.

It localises to the cytoplasm. Required for maturation of urease via the functional incorporation of the urease nickel metallocenter. The protein is Urease accessory protein UreD of Klebsiella pneumoniae subsp. pneumoniae (strain ATCC 700721 / MGH 78578).